A 233-amino-acid polypeptide reads, in one-letter code: Large ribosomal subunit protein mL67 (233 aa).

Positions Arg214–Ala233 are disordered. Residues Gln215 to Ala233 show a composition bias toward low complexity.

This sequence belongs to the mitochondrion-specific ribosomal protein mL67 family.

It is found in the nucleus. It localises to the mitochondrion. Its function is as follows. Transcription factor involved in regulation of RNA polymerase II-dependent transcription. Also involved in regulation of mitochondrial DNA recombination, maintenance and repair, and generation of homoplasmic cells. The protein is Large ribosomal subunit protein mL67 (MHR1) of Debaryomyces hansenii (strain ATCC 36239 / CBS 767 / BCRC 21394 / JCM 1990 / NBRC 0083 / IGC 2968) (Yeast).